The chain runs to 513 residues: Microcin J25-processing protein McjC (513 aa).

Residues 176–436 (STIDSIIDNI…FGSDIFWKKT (261 aa)) form the Asparagine synthetase domain.

It localises to the cytoplasm. In terms of biological role, along with McjB, necessary and sufficient to process the inactive microcin J25 (McjA) precursor into the active peptide. May be involved in the formation of the amide bond between Gly-38 and Glu-53 of McjA. The polypeptide is Microcin J25-processing protein McjC (mcjC) (Escherichia coli).